A 381-amino-acid chain; its full sequence is 5-cytosine rRNA methyltransferase NSUN4 (381 aa).

A mitochondrion-targeting transit peptide spans 1–25 (MAAPVLRCVRKLLKLVDFTPVPRRY). Gly182, Gly183, Lys184, and Asp201 together coordinate S-adenosyl-L-methionine. Position 203 is a phosphoserine (Ser203). S-adenosyl-L-methionine is bound by residues Arg206, Asp234, Gly235, and Asp252. The active-site Nucleophile is the Cys307.

The protein belongs to the class I-like SAM-binding methyltransferase superfamily. RsmB/NOP family. Heterodimer with MTERFD2/MTERF4; this interaction seems to be required for NSUN4 recruitment to the mitochondrial large ribosomal subunit.

It is found in the mitochondrion. It catalyses the reaction a cytidine in rRNA + S-adenosyl-L-methionine = a 5-methylcytidine in rRNA + S-adenosyl-L-homocysteine + H(+). The catalysed reaction is a cytidine in mRNA + S-adenosyl-L-methionine = a 5-methylcytidine in mRNA + S-adenosyl-L-homocysteine + H(+). Functionally, mitochondrial RNA cytosine C(5)-methyltransferase that methylates cytosine to 5-methylcytosine (m5C) in various RNAs, such as rRNAs, mRNAs and some long non-coding RNAs (lncRNAs). Involved in mitochondrial ribosome small subunit (SSU) maturation by catalyzing methylation of mitochondrial 12S rRNA; the function is independent of MTERFD2/MTERF4 and assembled mitochondrial ribosome large subunit (LSU). Targeted to LSU by MTERFD2/MTERF4 and probably is involved in a final step in ribosome biogenesis to ensure that SSU and LSU are assembled. In vitro can methylate 16S rRNA of the LSU; the methylation is enhanced by MTERFD/MTERF4. Also acts as a regulator of innate immunity by marking double-stranded mitochondrial RNAs(mt-dsRNAs) generated in response to stress: catalyzes m5C modification on mitochondrial RNAs, such as a mRNAs and lncRNAs, with a preference for the termini of light-strand lncRNAs, promoting their degradation and cytosolic release. Modified light-strand lncRNAs are then recognized by C1QBP reader and recruited to the mitochondrial degradosome complex, which promotes their degradation. This is 5-cytosine rRNA methyltransferase NSUN4 from Mus musculus (Mouse).